A 1023-amino-acid chain; its full sequence is Sodium/potassium-transporting ATPase subunit alpha-1 (1023 aa).

Positions 1 to 5 (MGKGV) are excised as a propeptide. Residues 1–11 (MGKGVGRDKYE) show a composition bias toward basic and acidic residues. Positions 1–39 (MGKGVGRDKYEPAAVSEHGDKKGKKAKKERDMDELKKEV) are disordered. Residues 6–96 (GRDKYEPAAV…PEWVKFCRQL (91 aa)) are Cytoplasmic-facing. An N6-acetyllysine modification is found at Lys9. Tyr10 carries the post-translational modification Phosphotyrosine. Residue Ser16 is modified to Phosphoserine. Residue Lys21 is modified to N6-acetyllysine. A compositionally biased stretch (basic and acidic residues) spans 28-39 (KERDMDELKKEV). Residues Ser40 and Ser47 each carry the phosphoserine modification. The segment at 82–84 (PPP) is phosphoinositide-3 kinase binding. A helical transmembrane segment spans residues 97–117 (FGGFSMLLWIGAILCFLAYGI). The Extracellular segment spans residues 118–129 (RSATEEEPPNDD). The chain crosses the membrane as a helical span at residues 130–150 (LYLGVVLSAVVIITGCFSYYQ). The Cytoplasmic portion of the chain corresponds to 151–291 (EAKSSKIMES…TPIAEEIEHF (141 aa)). The segment at 216-235 (SSLTGESEPQTRSPDFTNEN) is disordered. Residue Ser228 is modified to Phosphoserine. Tyr260 bears the Phosphotyrosine mark. The chain crosses the membrane as a helical span at residues 292–312 (IHLITGVAVFLGVSFFILSLI). At 313-319 (LEYTWLE) the chain is on the extracellular side. The chain crosses the membrane as a helical span at residues 320–340 (AVIFLIGIIVANVPEGLLATV). Topologically, residues 341 to 775 (TVCLTLTAKR…RLIFDNLKKS (435 aa)) are cytoplasmic. Asp376 (4-aspartylphosphate intermediate) is an active-site residue. Ser452 and Ser484 each carry phosphoserine. ATP is bound at residue Lys487. Tyr542 is subject to Phosphotyrosine. Positions 596–717 (RAAVPDAVGK…QGAIVAVTGD (122 aa)) are mediates interaction with SCN7A. An N6-succinyllysine modification is found at Lys661. Residues Ser668 and Ser675 each carry the phosphoserine modification. Positions 717 and 721 each coordinate Mg(2+). The helical transmembrane segment at 776–798 (IAYTLTSNIPEITPFLIFIIANI) threads the bilayer. Topologically, residues 799–801 (PLP) are extracellular. A helical membrane pass occupies residues 802-824 (LGTVTILCIDLGTDMVPAISLAY). At 825–849 (EQAESDIMKRQPRNPKTDKLVNERL) the chain is on the cytoplasmic side. Residues 850–872 (ISMAYGQIGMIQALGGFFTYFVI) form a helical membrane-spanning segment. The Extracellular segment spans residues 873–915 (LAENGFLPFHLLGIRETWDDRWVNDVEDSYGQQWTYEQRKIVE). The helical transmembrane segment at 916-936 (FTCHTAFFVSIVVVQWADLVI) threads the bilayer. Residues 937–952 (CKTRRNSVFQQGMKNK) lie on the Cytoplasmic side of the membrane. Phosphoserine; by PKA is present on Ser943. Residues 953–973 (ILIFGLFEETALAAFLSYCPG) form a helical membrane-spanning segment. Residues 974–979 (MGAALR) are Extracellular-facing. The chain crosses the membrane as a helical span at residues 980–1000 (MYPLKPTWWFCAFPYSLLIFV). Topologically, residues 1001–1023 (YDEVRKLIIRRRPGGWVEKETYY) are cytoplasmic.

It belongs to the cation transport ATPase (P-type) (TC 3.A.3) family. Type IIC subfamily. The sodium/potassium-transporting ATPase is composed of a catalytic alpha subunit, an auxiliary non-catalytic beta subunit and an additional regulatory subunit. Interacts with regulatory subunit FXYD1. Interacts with regulatory subunit FXYD3. Interacts with SIK1. Interacts with SLC35G1 and STIM1. Interacts with CLN3; this interaction regulates the sodium/potassium-transporting ATPase complex localization at the plasma membrane. Interacts with SCN7A; activates ATP1A1 P-type sodium:potassium-exchanging transporter activity which indirectly signals to nearby neurons to regulate sodium homeostasis. In terms of processing, phosphorylation on Tyr-10 modulates pumping activity. Phosphorylation of Ser-943 by PKA modulates the response of ATP1A1 to PKC. Dephosphorylation by protein phosphatase 2A (PP2A) following increases in intracellular sodium, leading to increase catalytic activity.

The protein resides in the cell membrane. It localises to the basolateral cell membrane. Its subcellular location is the sarcolemma. The protein localises to the cell projection. It is found in the axon. The protein resides in the melanosome. It carries out the reaction K(+)(out) + Na(+)(in) + ATP + H2O = K(+)(in) + Na(+)(out) + ADP + phosphate + H(+). This is the catalytic component of the active enzyme, which catalyzes the hydrolysis of ATP coupled with the exchange of sodium and potassium ions across the plasma membrane. This action creates the electrochemical gradient of sodium and potassium ions, providing the energy for active transport of various nutrients. Could also be part of an osmosensory signaling pathway that senses body-fluid sodium levels and controls salt intake behavior as well as voluntary water intake to regulate sodium homeostasis. In Mus musculus (Mouse), this protein is Sodium/potassium-transporting ATPase subunit alpha-1 (Atp1a1).